Consider the following 202-residue polypeptide: MIQFIQHTGIVLPLDISDIDTDTIIPKQFLKATTRSNFGLYLFFNWRFLENTPKILNPNFVLNDPYYKHASILLTQRNFGCGSSREHAVWALMDYGFKVIIAPSFADIFHKNSFNNRLLLITLSELKINDLFKEIATQKKGISFTVNLHEQIIYVHNKKKCFFEINDFHKRCMLNNIDNISLTLQYDVAIKKYENNQPSYLK.

Belongs to the LeuD family. LeuD type 1 subfamily. Heterodimer of LeuC and LeuD.

The enzyme catalyses (2R,3S)-3-isopropylmalate = (2S)-2-isopropylmalate. Its pathway is amino-acid biosynthesis; L-leucine biosynthesis; L-leucine from 3-methyl-2-oxobutanoate: step 2/4. Catalyzes the isomerization between 2-isopropylmalate and 3-isopropylmalate, via the formation of 2-isopropylmaleate. This chain is 3-isopropylmalate dehydratase small subunit, found in Blochmanniella pennsylvanica (strain BPEN).